The primary structure comprises 241 residues: Non-structural protein 1 (241 aa).

Its subcellular location is the host cytoplasm. It is found in the host nucleus. Functionally, suppresses the RNA silencing-based antiviral response in Drosophila cells. The sequence is that of Non-structural protein 1 (NS) from Influenza C virus (strain C/Johannesburg/1/1966).